The primary structure comprises 337 residues: 1-aminocyclopropane-1-carboxylate deaminase (337 aa).

At lysine 50 the chain carries N6-(pyridoxal phosphate)lysine. Serine 77 (nucleophile) is an active-site residue.

This sequence belongs to the ACC deaminase/D-cysteine desulfhydrase family. As to quaternary structure, homotrimer. Pyridoxal 5'-phosphate serves as cofactor.

It carries out the reaction 1-aminocyclopropane-1-carboxylate + H2O = 2-oxobutanoate + NH4(+). In terms of biological role, catalyzes a cyclopropane ring-opening reaction, the irreversible conversion of 1-aminocyclopropane-1-carboxylate (ACC) to ammonia and alpha-ketobutyrate. Allows growth on ACC as a nitrogen source. This Methylobacterium nodulans (strain LMG 21967 / CNCM I-2342 / ORS 2060) protein is 1-aminocyclopropane-1-carboxylate deaminase.